Here is a 337-residue protein sequence, read N- to C-terminus: Ketol-acid reductoisomerase (NADP(+)) (337 aa).

The region spanning 3–183 (IELLYDADAD…GGARAGVIPT (181 aa)) is the KARI N-terminal Rossmann domain. NADP(+) contacts are provided by residues 26–29 (YGSQ), Arg49, Ser52, Ser54, and 84–87 (DTSQ). His109 is a catalytic residue. Gly135 lines the NADP(+) pocket. Positions 184-329 (TFREETETDL…SKLRDLMSWV (146 aa)) constitute a KARI C-terminal knotted domain. Asp192, Glu196, Glu228, and Glu232 together coordinate Mg(2+). Ser253 provides a ligand contact to substrate.

Belongs to the ketol-acid reductoisomerase family. Mg(2+) is required as a cofactor.

The catalysed reaction is (2R)-2,3-dihydroxy-3-methylbutanoate + NADP(+) = (2S)-2-acetolactate + NADPH + H(+). The enzyme catalyses (2R,3R)-2,3-dihydroxy-3-methylpentanoate + NADP(+) = (S)-2-ethyl-2-hydroxy-3-oxobutanoate + NADPH + H(+). The protein operates within amino-acid biosynthesis; L-isoleucine biosynthesis; L-isoleucine from 2-oxobutanoate: step 2/4. Its pathway is amino-acid biosynthesis; L-valine biosynthesis; L-valine from pyruvate: step 2/4. In terms of biological role, involved in the biosynthesis of branched-chain amino acids (BCAA). Catalyzes an alkyl-migration followed by a ketol-acid reduction of (S)-2-acetolactate (S2AL) to yield (R)-2,3-dihydroxy-isovalerate. In the isomerase reaction, S2AL is rearranged via a Mg-dependent methyl migration to produce 3-hydroxy-3-methyl-2-ketobutyrate (HMKB). In the reductase reaction, this 2-ketoacid undergoes a metal-dependent reduction by NADPH to yield (R)-2,3-dihydroxy-isovalerate. This is Ketol-acid reductoisomerase (NADP(+)) from Corynebacterium diphtheriae (strain ATCC 700971 / NCTC 13129 / Biotype gravis).